Reading from the N-terminus, the 309-residue chain is Coproporphyrin III ferrochelatase (309 aa).

Residues tyrosine 12, threonine 14, arginine 29, 45 to 46 (RY), serine 53, and tyrosine 124 contribute to the Fe-coproporphyrin III site. Fe(2+) is bound by residues histidine 182 and glutamate 263.

This sequence belongs to the ferrochelatase family. As to quaternary structure, monomer.

The protein resides in the cytoplasm. The enzyme catalyses Fe-coproporphyrin III + 2 H(+) = coproporphyrin III + Fe(2+). Its pathway is porphyrin-containing compound metabolism; protoheme biosynthesis. Functionally, involved in coproporphyrin-dependent heme b biosynthesis. Catalyzes the insertion of ferrous iron into coproporphyrin III to form Fe-coproporphyrin III. This Listeria monocytogenes serovar 1/2a (strain ATCC BAA-679 / EGD-e) protein is Coproporphyrin III ferrochelatase.